The chain runs to 594 residues: Shugoshin (594 aa).

Positions 38 to 61 (KITDMETKVSELVQENVSLRSRLS) form a coiled coil. 4 disordered regions span residues 104–178 (SGIH…KSSR), 201–266 (QLPI…TNKN), 342–380 (SKIK…RRTR), and 519–549 (TKQQ…RTKQ). Residues 220-240 (EEESQENKHTKEEREDEGKEN) adopt a coiled-coil conformation. The span at 224–239 (QENKHTKEEREDEGKE) shows a compositional bias: basic and acidic residues. The span at 252-261 (SVTNTGTECS) shows a compositional bias: polar residues. Basic residues predominate over residues 343–355 (KIKHSMKHPRTKL). A compositionally biased stretch (basic and acidic residues) spans 357–376 (GGQDDIMPHTDYDKDDEKRE). Composition is skewed to polar residues over residues 519–532 (TKQQ…SDPN) and 539–549 (NSNVKPTRTKQ).

Belongs to the shugoshin family.

The protein localises to the nucleus. It localises to the chromosome. It is found in the centromere. Plays a central role in chromosome cohesion during cell division by preventing premature dissociation of cohesin complex from centromeres after prophase, when most of cohesin complex dissociates from chromosomes arms. The sequence is that of Shugoshin (SGO1) from Kluyveromyces lactis (strain ATCC 8585 / CBS 2359 / DSM 70799 / NBRC 1267 / NRRL Y-1140 / WM37) (Yeast).